Reading from the N-terminus, the 229-residue chain is Uracil-DNA glycosylase (229 aa).

D70 acts as the Proton acceptor in catalysis.

It belongs to the uracil-DNA glycosylase (UDG) superfamily. UNG family.

The protein resides in the cytoplasm. It carries out the reaction Hydrolyzes single-stranded DNA or mismatched double-stranded DNA and polynucleotides, releasing free uracil.. Excises uracil residues from the DNA which can arise as a result of misincorporation of dUMP residues by DNA polymerase or due to deamination of cytosine. This is Uracil-DNA glycosylase from Chlamydia abortus (strain DSM 27085 / S26/3) (Chlamydophila abortus).